We begin with the raw amino-acid sequence, 212 residues long: Thiamine-phosphate synthase (212 aa).

4-amino-2-methyl-5-(diphosphooxymethyl)pyrimidine is bound by residues 35-39 (QLRRK) and asparagine 67. Residues aspartate 68 and aspartate 87 each coordinate Mg(2+). Residue serine 106 coordinates 4-amino-2-methyl-5-(diphosphooxymethyl)pyrimidine. 132-134 (TGS) contributes to the 2-[(2R,5Z)-2-carboxy-4-methylthiazol-5(2H)-ylidene]ethyl phosphate binding site. A 4-amino-2-methyl-5-(diphosphooxymethyl)pyrimidine-binding site is contributed by lysine 135. Residues glycine 163 and 183 to 184 (IS) contribute to the 2-[(2R,5Z)-2-carboxy-4-methylthiazol-5(2H)-ylidene]ethyl phosphate site.

Belongs to the thiamine-phosphate synthase family. The cofactor is Mg(2+).

The enzyme catalyses 2-[(2R,5Z)-2-carboxy-4-methylthiazol-5(2H)-ylidene]ethyl phosphate + 4-amino-2-methyl-5-(diphosphooxymethyl)pyrimidine + 2 H(+) = thiamine phosphate + CO2 + diphosphate. It carries out the reaction 2-(2-carboxy-4-methylthiazol-5-yl)ethyl phosphate + 4-amino-2-methyl-5-(diphosphooxymethyl)pyrimidine + 2 H(+) = thiamine phosphate + CO2 + diphosphate. It catalyses the reaction 4-methyl-5-(2-phosphooxyethyl)-thiazole + 4-amino-2-methyl-5-(diphosphooxymethyl)pyrimidine + H(+) = thiamine phosphate + diphosphate. It participates in cofactor biosynthesis; thiamine diphosphate biosynthesis; thiamine phosphate from 4-amino-2-methyl-5-diphosphomethylpyrimidine and 4-methyl-5-(2-phosphoethyl)-thiazole: step 1/1. Condenses 4-methyl-5-(beta-hydroxyethyl)thiazole monophosphate (THZ-P) and 2-methyl-4-amino-5-hydroxymethyl pyrimidine pyrophosphate (HMP-PP) to form thiamine monophosphate (TMP). This Chlorobium luteolum (strain DSM 273 / BCRC 81028 / 2530) (Pelodictyon luteolum) protein is Thiamine-phosphate synthase.